Consider the following 504-residue polypeptide: MKYTKTLLAMVLSATFCQAYAEDKVWISIGADANQTVMKSGAESILPNSVASSGQVWVGQVDVAQLAELSHNMHEEHNRCGGYMVHPSAQSAMAASAMPTTLASFVMPPITQQATVTAWLPQVDASQITGTISSLESFTNRFYTTTSGAQASDWIASEWQALSASLPNASVKQVSHSGYNQKSVVMTITGSEAPDEWIVIGGHLDSTIGSHTNEQSVAPGADDDASGIAAVTEVIRVLSENNFQPKRSIAFMAYAAEEVGLRGSQDLANQYKSEGKNVVSALQLDMTNYKGSAQDVVFITDYTDSNFTQYLTQLMDEYLPSLTYGFDTCGYACSDHASWHNAGYPAAMPFESKFNDYNPRIHTTQDTLANSDPTGSHAKKFTQLGLAYAIEMGSATGDTPTPGNQLEDGVPVTDLSGSRGSNVWYTFELETQKNLQITTSGGYGDLDLYVKFGSKASKQNWDCRPYLSGNNEVCTFNNASPGTYSVMLTGYSNYSGASLKASTF.

The first 21 residues, 1 to 21 (MKYTKTLLAMVLSATFCQAYA), serve as a signal peptide directing secretion. A propeptide spanning residues 22–106 (EDKVWISIGA…AMPTTLASFV (85 aa)) is cleaved from the precursor. Zn(2+) is bound by residues His203, Asp223, Glu258, and Asp285. A disulfide bond links Cys329 and Cys333. His362 is a Zn(2+) binding site. Residues 406-504 (LEDGVPVTDL…SGASLKASTF (99 aa)) constitute a propeptide, removed in mature form.

The protein belongs to the peptidase M28 family. M28E subfamily. Requires Zn(2+) as cofactor.

The protein localises to the secreted. It catalyses the reaction Release of an N-terminal amino acid, preferentially leucine, but not glutamic or aspartic acids.. The sequence is that of Bacterial leucyl aminopeptidase from Vibrio proteolyticus (Aeromonas proteolytica).